Reading from the N-terminus, the 222-residue chain is MTISRSTMAQILDYTLLGPEVTNSELAAFIDSAIELGVGTICVPNSMVNLTAKAQEAGIRVATVAGFPHGKTPALVKAAEARLAVQSGASEVDVVLDIAVVKEGDANRLLQEIVAIREAVPSPVVLKFILETAVVSDEAIVTAVNALIAAGADFAKTSTGFHPAGGATVEAVRVMASASRGRVGIKAAGGVKTWEDAVAFVEAGATRIGTSNAGAILEGAPE.

The active-site Proton donor/acceptor is Asp-93. Residue Lys-156 is the Schiff-base intermediate with acetaldehyde of the active site. Lys-186 acts as the Proton donor/acceptor in catalysis.

This sequence belongs to the DeoC/FbaB aldolase family. DeoC type 1 subfamily.

The protein resides in the cytoplasm. It catalyses the reaction 2-deoxy-D-ribose 5-phosphate = D-glyceraldehyde 3-phosphate + acetaldehyde. It functions in the pathway carbohydrate degradation; 2-deoxy-D-ribose 1-phosphate degradation; D-glyceraldehyde 3-phosphate and acetaldehyde from 2-deoxy-alpha-D-ribose 1-phosphate: step 2/2. Catalyzes a reversible aldol reaction between acetaldehyde and D-glyceraldehyde 3-phosphate to generate 2-deoxy-D-ribose 5-phosphate. The polypeptide is Deoxyribose-phosphate aldolase (Corynebacterium glutamicum (strain ATCC 13032 / DSM 20300 / JCM 1318 / BCRC 11384 / CCUG 27702 / LMG 3730 / NBRC 12168 / NCIMB 10025 / NRRL B-2784 / 534)).